Reading from the N-terminus, the 393-residue chain is MSSIRYHSSAFDDGSFSVMARNLENMVNRANAQYVKIDKHREPYTVHYNALRDKVYSEWKESGVLGTLLKGSTLCGGYGDKLKVSMPDEFDLLIHLVFPENDKIIVKADASKKGNVILDMTKVMEIIGSQEHNKPVFDLLQKIVNKKKQLLEDKLNSLLQSIMTQTLNKMGNQIEVAGRISHLEYKKCGPAHTIFVKGPCEYSVDFVPAIRLSAAQVVLAPEQRRHFGGTLYWDAIPKPMKPAKTDNASFRASFYEAERSLLLGKQSLKPAIRLLKQNRNVKNKANLKSYHIKTLFLWQVVQQDASYWSNSPKDIFIEMLGKLADSLALTPKKGKLPFFWDPKLDMFAELTDSQRTDLFNHFRKCEYTFRKDNGNVNDCTENNVHSSFSINTR.

Residues E89, D91, and D205 each coordinate Mg(2+). 89 to 91 (EFD) is a binding site for ATP. Residues D205 and 251–258 (RASFYEAE) each bind GTP. Residues 255 to 258 (YEAE), K276, and 289 to 293 (SYHIK) contribute to the ATP site.

It belongs to the mab-21 family. The cofactor is Mg(2+). Requires Mn(2+) as cofactor.

It carries out the reaction GTP + ATP = 3',2'-cGAMP + 2 diphosphate. The enzyme catalyses GTP + ATP = pppA(2'-5')pG + diphosphate. It catalyses the reaction pppA(2'-5')pG = 3',2'-cGAMP + diphosphate. Its activity is regulated as follows. The enzyme activity is specifically activated by double-stranded RNA (dsRNA). Recognizes long dsRNA (&gt;30 bp) with no preference for 5' RNA phosphorylation. Nucleotidyltransferase that catalyzes the formation of cyclic GMP-AMP (3',2'-cGAMP) from ATP and GTP and plays a key role in innate immunity. Synthesizes 3',2'-cGAMP in a two-step reaction through production of the linear intermediate pppA(2'-5')pG. Acts as a key sensor of double-stranded RNA (dsRNA), the presence of dsRNA in the cytoplasm being a danger signal that triggers the immune responses. Directly binds dsRNA longer than 35 bp, activating the nucleotidyltransferase activity, leading to synthesis of 3',2'-cGAMP, a second messenger that binds to and activates Sting, thereby triggering the antiviral immune response via activation of the NF-kappa-B transcription factor Rel (Relish). The protein is Cyclic GMP-AMP synthase-like receptor 1 of Drosophila simulans (Fruit fly).